The following is a 28-amino-acid chain: Omega-conotoxin-like CnVIIH (28 aa).

Disulfide bonds link cysteine 1–cysteine 16, cysteine 8–cysteine 20, and cysteine 15–cysteine 27. Proline 7 carries the post-translational modification 4-hydroxyproline; partial. Position 12 is a methionine sulfoxide (methionine 12). A Cysteine amide modification is found at cysteine 27.

It belongs to the conotoxin O1 superfamily. Expressed by the venom duct.

It localises to the secreted. In terms of biological role, omega-conotoxins act at presynaptic membranes, they bind and block voltage-gated calcium channels (Cav). This toxin blocks N-type calcium channels (Cav2.2/CACNA1B) with high potency. Unexpectedly, it does not show any blocking activity at amphibian neuromuscular junction. In vivo, when intracerebroventricularly injected into mice causes shaking activity, and, at higher doses, causes mild tremors. When injected intramuscularly into fish, it causes paralysis, and, at higher doses, causes death. The sequence is that of Omega-conotoxin-like CnVIIH from Conus consors (Singed cone).